We begin with the raw amino-acid sequence, 185 residues long: Ribosome-recycling factor (185 aa).

The protein belongs to the RRF family.

The protein resides in the cytoplasm. Functionally, responsible for the release of ribosomes from messenger RNA at the termination of protein biosynthesis. May increase the efficiency of translation by recycling ribosomes from one round of translation to another. The chain is Ribosome-recycling factor from Campylobacter lari (strain RM2100 / D67 / ATCC BAA-1060).